Here is a 360-residue protein sequence, read N- to C-terminus: Phospho-N-acetylmuramoyl-pentapeptide-transferase (360 aa).

The next 10 helical transmembrane spans lie at 26 to 46, 74 to 94, 97 to 117, 134 to 154, 168 to 188, 199 to 219, 236 to 256, 263 to 283, 288 to 308, and 338 to 358; these read AILGLLTALIFSLWWGPKLIE, MGGLLILAAIFISVLLWGDLG, YVWVMLFVLGSFGLIGFIDDY, YILQSLAALLIAFFLYATAAN, VMPQLGGVFIVLAYFTIVGSS, GLAIMPTVMVAAAFALIAYLS, SGELVIVCTAIVGAGLGFLWF, VFMGDVGSLSLGAALGAIAVL, ILLVIMGGVFVMETVSVILQV, and VIVRFWIISIFLVLLGLATLK.

It belongs to the glycosyltransferase 4 family. MraY subfamily. The cofactor is Mg(2+).

It localises to the cell inner membrane. The catalysed reaction is UDP-N-acetyl-alpha-D-muramoyl-L-alanyl-gamma-D-glutamyl-meso-2,6-diaminopimeloyl-D-alanyl-D-alanine + di-trans,octa-cis-undecaprenyl phosphate = di-trans,octa-cis-undecaprenyl diphospho-N-acetyl-alpha-D-muramoyl-L-alanyl-D-glutamyl-meso-2,6-diaminopimeloyl-D-alanyl-D-alanine + UMP. It participates in cell wall biogenesis; peptidoglycan biosynthesis. In terms of biological role, catalyzes the initial step of the lipid cycle reactions in the biosynthesis of the cell wall peptidoglycan: transfers peptidoglycan precursor phospho-MurNAc-pentapeptide from UDP-MurNAc-pentapeptide onto the lipid carrier undecaprenyl phosphate, yielding undecaprenyl-pyrophosphoryl-MurNAc-pentapeptide, known as lipid I. This chain is Phospho-N-acetylmuramoyl-pentapeptide-transferase, found in Shewanella putrefaciens (strain CN-32 / ATCC BAA-453).